We begin with the raw amino-acid sequence, 274 residues long: Formamidopyrimidine-DNA glycosylase (274 aa).

The active-site Schiff-base intermediate with DNA is the Pro2. The active-site Proton donor is Glu3. The Proton donor; for beta-elimination activity role is filled by Lys57. Residues His90, Arg109, and Lys150 each contribute to the DNA site. The FPG-type zinc-finger motif lies at 235 to 269 (FVYGRKDKACLICGHTIESIKQGQRSTFFCRHCQH). Residue Arg259 is the Proton donor; for delta-elimination activity of the active site.

It belongs to the FPG family. In terms of assembly, monomer. Requires Zn(2+) as cofactor.

It carries out the reaction Hydrolysis of DNA containing ring-opened 7-methylguanine residues, releasing 2,6-diamino-4-hydroxy-5-(N-methyl)formamidopyrimidine.. The catalysed reaction is 2'-deoxyribonucleotide-(2'-deoxyribose 5'-phosphate)-2'-deoxyribonucleotide-DNA = a 3'-end 2'-deoxyribonucleotide-(2,3-dehydro-2,3-deoxyribose 5'-phosphate)-DNA + a 5'-end 5'-phospho-2'-deoxyribonucleoside-DNA + H(+). Functionally, involved in base excision repair of DNA damaged by oxidation or by mutagenic agents. Acts as a DNA glycosylase that recognizes and removes damaged bases. Has a preference for oxidized purines, such as 7,8-dihydro-8-oxoguanine (8-oxoG). Has AP (apurinic/apyrimidinic) lyase activity and introduces nicks in the DNA strand. Cleaves the DNA backbone by beta-delta elimination to generate a single-strand break at the site of the removed base with both 3'- and 5'-phosphates. This chain is Formamidopyrimidine-DNA glycosylase, found in Proteus mirabilis (strain HI4320).